Reading from the N-terminus, the 102-residue chain is Protein AC4 (102 aa).

It belongs to the geminiviridae protein AC4/C4 family.

Functionally, pathogenicity determinant. May act as a suppressor of RNA-mediated gene silencing, also known as post-transcriptional gene silencing (PTGS), a mechanism of plant viral defense that limits the accumulation of viral RNAs. The chain is Protein AC4 from Indian cassava mosaic virus (ICMV).